The following is a 292-amino-acid chain: Mitochondrial ornithine transporter 1 (292 aa).

3 Solcar repeats span residues 11–97 (EGAI…CSKF), 105–196 (SPLG…VKKS), and 211–292 (SKIW…LSAL). 6 helical membrane-spanning segments follow: residues 14-34 (ILDIINGSIAGACGKVIEFPF), 69-89 (FFQGIASPLVGACLENATLFV), 104-124 (VSPLGQILISGGVAGSCASLV), 171-187 (GQSGTFIRESFGGVAWF), 213-233 (IWELLISGGSAGLAFNASIFP), and 267-287 (GLGITLFRAVPANAAVFYIFE).

This sequence belongs to the mitochondrial carrier (TC 2.A.29) family.

The protein localises to the mitochondrion inner membrane. Required for arginine biosynthesis. Transports ornithine synthesized from glutamate in the mitochondrial matrix to the cytosol, where it is converted to arginine. This is Mitochondrial ornithine transporter 1 (ORT1) from Saccharomyces cerevisiae (strain ATCC 204508 / S288c) (Baker's yeast).